The chain runs to 72 residues: MSKDDCIEFEGTVSETLPNTTFRIKLENGHEVTAHISGRMRKNYIRILTGDRVKIEMTAYDLTKGRIIYRMK.

An S1-like domain is found at 1 to 72 (MSKDDCIEFE…TKGRIIYRMK (72 aa)).

It belongs to the IF-1 family. As to quaternary structure, component of the 30S ribosomal translation pre-initiation complex which assembles on the 30S ribosome in the order IF-2 and IF-3, IF-1 and N-formylmethionyl-tRNA(fMet); mRNA recruitment can occur at any time during PIC assembly.

Its subcellular location is the cytoplasm. One of the essential components for the initiation of protein synthesis. Stabilizes the binding of IF-2 and IF-3 on the 30S subunit to which N-formylmethionyl-tRNA(fMet) subsequently binds. Helps modulate mRNA selection, yielding the 30S pre-initiation complex (PIC). Upon addition of the 50S ribosomal subunit IF-1, IF-2 and IF-3 are released leaving the mature 70S translation initiation complex. This Xylella fastidiosa (strain 9a5c) protein is Translation initiation factor IF-1.